A 94-amino-acid chain; its full sequence is uncharacterized protein (94 aa).

Transmembrane regions (helical) follow at residues 7–24 (IFFIIVLVGFALFMSFNV) and 39–61 (AVPITLSLLFAFACGALTALLFL). A disordered region spans residues 68 to 94 (TRKQKREDSPTSAPTGGVSSPEHVDVP).

Its subcellular location is the cell membrane. This is an uncharacterized protein from Treponema pallidum (strain Nichols).